A 46-amino-acid chain; its full sequence is Protein PsbN (46 aa).

Residues 7-27 traverse the membrane as a helical segment; the sequence is ALSVALGVMAVVLGLTGFGVY.

This sequence belongs to the PsbN family.

It is found in the cellular thylakoid membrane. Its function is as follows. May play a role in photosystem I and II biogenesis. This chain is Protein PsbN, found in Synechococcus sp. (strain CC9902).